The following is a 207-amino-acid chain: Glycerol-3-phosphate acyltransferase 1 (207 aa).

Transmembrane regions (helical) follow at residues 3-23, 53-73, 85-105, 127-147, and 154-174; these read YVIASLLGYIFGCIHGSQIVG, IVVALIDIFKATAAIFLLLIL, HIYIYLTALFVIIGHNYPITM, IALIGIGVLILFTIATDYLAV, and ISFLITTYYIFGLAPFFIVVG.

It belongs to the PlsY family. As to quaternary structure, probably interacts with PlsX.

The protein resides in the cell membrane. The catalysed reaction is an acyl phosphate + sn-glycerol 3-phosphate = a 1-acyl-sn-glycero-3-phosphate + phosphate. The protein operates within lipid metabolism; phospholipid metabolism. In terms of biological role, catalyzes the transfer of an acyl group from acyl-phosphate (acyl-PO(4)) to glycerol-3-phosphate (G3P) to form lysophosphatidic acid (LPA). This enzyme utilizes acyl-phosphate as fatty acyl donor, but not acyl-CoA or acyl-ACP. This chain is Glycerol-3-phosphate acyltransferase 1, found in Oceanobacillus iheyensis (strain DSM 14371 / CIP 107618 / JCM 11309 / KCTC 3954 / HTE831).